The chain runs to 310 residues: Cell division protein FtsQ (310 aa).

The segment at 1 to 57 is disordered; sequence MSEPENTAEDKDAEAAISADAVESETTADGGENPAEGESAEGPRMRARRERMERREA. The Cytoplasmic portion of the chain corresponds to 1 to 95; it reads MSEPENTAED…AGRGKVQGLQ (95 aa). The chain crosses the membrane as a helical span at residues 96–116; it reads TLLLVVLLALIAVGLGSILYF. Over 117–310 the chain is Extracellular; sequence TPLMSVRQTV…VSSPDLPTVK (194 aa). Residues 120 to 188 form the POTRA domain; it reads MSVRQTVVTG…STLRVTIVER (69 aa).

Belongs to the FtsQ/DivIB family. FtsQ subfamily.

The protein localises to the cell membrane. In terms of biological role, essential cell division protein. In Mycobacteroides abscessus (strain ATCC 19977 / DSM 44196 / CCUG 20993 / CIP 104536 / JCM 13569 / NCTC 13031 / TMC 1543 / L948) (Mycobacterium abscessus), this protein is Cell division protein FtsQ.